The following is a 435-amino-acid chain: Chaperone SurA (435 aa).

An N-terminal signal peptide occupies residues 1–24 (MRLRSFAFLGFMLLVAMAPSMASA). 2 PpiC domains span residues 173-274 (DTAY…KLID) and 286-385 (VTEN…ELED).

It localises to the periplasm. The enzyme catalyses [protein]-peptidylproline (omega=180) = [protein]-peptidylproline (omega=0). In terms of biological role, chaperone involved in the correct folding and assembly of outer membrane proteins. Recognizes specific patterns of aromatic residues and the orientation of their side chains, which are found more frequently in integral outer membrane proteins. May act in both early periplasmic and late outer membrane-associated steps of protein maturation. The chain is Chaperone SurA from Chromohalobacter salexigens (strain ATCC BAA-138 / DSM 3043 / CIP 106854 / NCIMB 13768 / 1H11).